The following is a 735-amino-acid chain: 1,4-alpha-glucan branching enzyme GlgB (735 aa).

D414 serves as the catalytic Nucleophile. The active-site Proton donor is E469.

The protein belongs to the glycosyl hydrolase 13 family. GlgB subfamily. In terms of assembly, monomer.

The enzyme catalyses Transfers a segment of a (1-&gt;4)-alpha-D-glucan chain to a primary hydroxy group in a similar glucan chain.. Its pathway is glycan biosynthesis; glycogen biosynthesis. In terms of biological role, catalyzes the formation of the alpha-1,6-glucosidic linkages in glycogen by scission of a 1,4-alpha-linked oligosaccharide from growing alpha-1,4-glucan chains and the subsequent attachment of the oligosaccharide to the alpha-1,6 position. This Burkholderia lata (strain ATCC 17760 / DSM 23089 / LMG 22485 / NCIMB 9086 / R18194 / 383) protein is 1,4-alpha-glucan branching enzyme GlgB.